A 200-amino-acid polypeptide reads, in one-letter code: MQLKRVAEAKLPTPWGDFLMVGFEELATGQDHVALVYGDISGQSPVLARVHSECLTGDALFSLRCDCGFQLEAALSHIAEEGRGILLYHRQEGRNIGLLNKIRAYALQDQGYDTVEANHQLGFAADERDFTLCADMFKLLNVEQVRLLTNNPKKVEILTEAGINIVERVPLIVGRNPKNAHYLDTKAAKMGHLLNSKPTE.

49–53 (RVHSE) is a GTP binding site. Residues Cys54, Cys65, and Cys67 each coordinate Zn(2+). GTP-binding positions include Gln70, 92–94 (EGR), and Thr114. Asp126 serves as the catalytic Proton acceptor. Catalysis depends on Arg128, which acts as the Nucleophile. GTP contacts are provided by Thr149 and Lys154.

It belongs to the GTP cyclohydrolase II family. As to quaternary structure, homodimer. Zn(2+) is required as a cofactor.

The enzyme catalyses GTP + 4 H2O = 2,5-diamino-6-hydroxy-4-(5-phosphoribosylamino)-pyrimidine + formate + 2 phosphate + 3 H(+). It functions in the pathway cofactor biosynthesis; riboflavin biosynthesis; 5-amino-6-(D-ribitylamino)uracil from GTP: step 1/4. Its function is as follows. Catalyzes the conversion of GTP to 2,5-diamino-6-ribosylamino-4(3H)-pyrimidinone 5'-phosphate (DARP), formate and pyrophosphate. This is GTP cyclohydrolase-2 from Klebsiella pneumoniae subsp. pneumoniae (strain ATCC 700721 / MGH 78578).